Consider the following 132-residue polypeptide: Small ribosomal subunit protein uS8 (132 aa).

This sequence belongs to the universal ribosomal protein uS8 family. As to quaternary structure, part of the 30S ribosomal subunit. Contacts proteins S5 and S12.

Its function is as follows. One of the primary rRNA binding proteins, it binds directly to 16S rRNA central domain where it helps coordinate assembly of the platform of the 30S subunit. The sequence is that of Small ribosomal subunit protein uS8 from Caulobacter vibrioides (strain ATCC 19089 / CIP 103742 / CB 15) (Caulobacter crescentus).